Consider the following 180-residue polypeptide: Pro-glucagon (180 aa).

The signal sequence occupies residues 1-20 (MKSIYFVAGLFVMLVQGSWQ). Residues 26–59 (TEEKSRSFSASQADPLSDPDQMNEDKRHSQGTFT) are disordered. Residue serine 54 is modified to Phosphoserine. Positions 84-89 (NRNNIA) are excised as a propeptide. Serine 105 and serine 108 each carry phosphoserine. Arginine 127 carries the post-translational modification Arginine amide. The propeptide occupies 131-145 (DFPEEVAIVEELGRR). Phosphoserine is present on residues serine 150 and serine 152.

This sequence belongs to the glucagon family. In terms of processing, proglucagon is post-translationally processed in a tissue-specific manner in pancreatic A cells and intestinal L cells. In pancreatic A cells, the major bioactive hormone is glucagon cleaved by PCSK2/PC2. In the intestinal L cells PCSK1/PC1 liberates GLP-1, GLP-2, glicentin and oxyntomodulin. GLP-1 is further N-terminally truncated by post-translational processing in the intestinal L cells resulting in GLP-1(7-37) GLP-1-(7-36)amide. The C-terminal amidation is neither important for the metabolism of GLP-1 nor for its effects on the endocrine pancreas. In terms of tissue distribution, secreted in the A cells of the islets of Langerhans. Secreted in the A cells of the islets of Langerhans. Secreted from enteroendocrine L cells throughout the gastrointestinal tract. Also secreted in selected neurons in the brain. As to expression, secreted from enteroendocrine cells throughout the gastrointestinal tract. Also secreted in selected neurons in the brain. In terms of tissue distribution, secreted from enteroendocrine cells throughout the gastrointestinal tract.

It is found in the secreted. Functionally, plays a key role in glucose metabolism and homeostasis. Regulates blood glucose by increasing gluconeogenesis and decreasing glycolysis. A counterregulatory hormone of insulin, raises plasma glucose levels in response to insulin-induced hypoglycemia. Plays an important role in initiating and maintaining hyperglycemic conditions in diabetes. In terms of biological role, potent stimulator of glucose-dependent insulin release. Also stimulates insulin release in response to IL6. Plays important roles on gastric motility and the suppression of plasma glucagon levels. May be involved in the suppression of satiety and stimulation of glucose disposal in peripheral tissues, independent of the actions of insulin. Has growth-promoting activities on intestinal epithelium. May also regulate the hypothalamic pituitary axis (HPA) via effects on LH, TSH, CRH, oxytocin, and vasopressin secretion. Increases islet mass through stimulation of islet neogenesis and pancreatic beta cell proliferation. Inhibits beta cell apoptosis. Its function is as follows. Stimulates intestinal growth and up-regulates villus height in the small intestine, concomitant with increased crypt cell proliferation and decreased enterocyte apoptosis. The gastrointestinal tract, from the stomach to the colon is the principal target for GLP-2 action. Plays a key role in nutrient homeostasis, enhancing nutrient assimilation through enhanced gastrointestinal function, as well as increasing nutrient disposal. Stimulates intestinal glucose transport and decreases mucosal permeability. Significantly reduces food intake. Inhibits gastric emptying in humans. Suppression of gastric emptying may lead to increased gastric distension, which may contribute to satiety by causing a sensation of fullness. Functionally, may modulate gastric acid secretion and the gastro-pyloro-duodenal activity. May play an important role in intestinal mucosal growth in the early period of life. In Homo sapiens (Human), this protein is Pro-glucagon.